We begin with the raw amino-acid sequence, 535 residues long: Dimethylaniline monooxygenase [N-oxide-forming] 2 (535 aa).

Ala-2 is modified (N-acetylalanine). Residues 9–13 (GAGVS), Glu-32, 40–41 (LW), and 61–62 (NT) each bind FAD. NADP(+) is bound by residues 60-61 (TN) and 195-198 (SASD). Lys-492 participates in a covalent cross-link: Glycyl lysine isopeptide (Lys-Gly) (interchain with G-Cter in SUMO). The chain crosses the membrane as a helical span at residues 510 to 530 (FPVSFLLKFLGLFALVLAFLF).

It belongs to the FMO family. Requires FAD as cofactor. Mg(2+) is required as a cofactor. As to expression, lung.

The protein localises to the microsome membrane. It is found in the endoplasmic reticulum membrane. It catalyses the reaction N,N-dimethylaniline + NADPH + O2 + H(+) = N,N-dimethylaniline N-oxide + NADP(+) + H2O. Functionally, catalyzes the oxidative metabolism of numerous xenobiotics, including mainly therapeutic drugs and insecticides that contain a soft nucleophile, most commonly nitrogen and sulfur and participates to their bioactivation. Most drug substrates are tertiary amines such as prochlorperazine and trifluoperazine which are N-oxygenated to form the N-oxide, or sulfides such as thiourea and ethionamide, which are S-oxygenated to the sulfoxide. Others include primary alkylamines such as N-dodecylamine and octan-1-amine that are sequentially monooxygenated to oximes through intermediate hydroxylamines and both steps are NADPH- and oxygen-dependent. Also metabolized N-Deacetyl ketoconazole (DAK) to N-hydroxy-DAK and appears to further metabolizes N-hydroxy-DAK to two others metabolites. Also catalyzes S-oxygenation of the thioether-containing organophosphate insecticides, phorate and disulfoton. The chain is Dimethylaniline monooxygenase [N-oxide-forming] 2 from Oryctolagus cuniculus (Rabbit).